The primary structure comprises 119 residues: Large ribosomal subunit protein bL20 (119 aa).

It belongs to the bacterial ribosomal protein bL20 family.

Binds directly to 23S ribosomal RNA and is necessary for the in vitro assembly process of the 50S ribosomal subunit. It is not involved in the protein synthesizing functions of that subunit. The protein is Large ribosomal subunit protein bL20 of Shouchella clausii (strain KSM-K16) (Alkalihalobacillus clausii).